The chain runs to 169 residues: E1B protein, small T-antigen (169 aa).

Positions 147–169 are disordered; that stretch reads GSVVEEEQGEEHLARDSDDPFFD. Over residues 156–169 the composition is skewed to basic and acidic residues; sequence EEHLARDSDDPFFD.

It belongs to the adenoviridae E1B 19 kDa protein family.

This chain is E1B protein, small T-antigen, found in Canine adenovirus serotype 1 (strain Glaxo) (CAdV-1).